A 175-amino-acid chain; its full sequence is MALLEIIHYPSKILRTISKEIVSFDSKLHQQLDDMRETMIASEGIGLAAIQVGLPLRMLIINLPREDGVQHKEDCLEIINPKFIETKGTIMYKEGCLSVPGFYEEVERFEKVKIEYQNRFAEVKVLEASELLAVAIQHEIDHLNGVLFVDKLSILKRKKFEKELKELNKNPKSKS.

2 residues coordinate Fe cation: Cys96 and His138. The active site involves Glu139. A Fe cation-binding site is contributed by His142.

Belongs to the polypeptide deformylase family. Fe(2+) serves as cofactor.

It carries out the reaction N-terminal N-formyl-L-methionyl-[peptide] + H2O = N-terminal L-methionyl-[peptide] + formate. In terms of biological role, removes the formyl group from the N-terminal Met of newly synthesized proteins. Requires at least a dipeptide for an efficient rate of reaction. N-terminal L-methionine is a prerequisite for activity but the enzyme has broad specificity at other positions. The sequence is that of Peptide deformylase from Helicobacter pylori (strain Shi470).